The sequence spans 144 residues: Mediator of RNA polymerase II transcription subunit 9 (144 aa).

A coiled-coil region spans residues 85-143; the sequence is QDCNHKIFELQKRFESAREQIRQLPGIDFNKEEQQQRLELLRNQLKLKQQLIRKYKDTE.

This sequence belongs to the Mediator complex subunit 9 family. As to quaternary structure, component of the Mediator complex.

The protein localises to the nucleus. In terms of biological role, component of the Mediator complex, a coactivator involved in the regulated transcription of nearly all RNA polymerase II-dependent genes. Mediator functions as a bridge to convey information from gene-specific regulatory proteins to the basal RNA polymerase II transcription machinery. Mediator is recruited to promoters by direct interactions with regulatory proteins and serves as a scaffold for the assembly of a functional preinitiation complex with RNA polymerase II and the general transcription factors. The polypeptide is Mediator of RNA polymerase II transcription subunit 9 (MED9) (Drosophila melanogaster (Fruit fly)).